A 294-amino-acid chain; its full sequence is NAD kinase (294 aa).

Residue D74 is the Proton acceptor of the active site. NAD(+)-binding positions include 74–75 (DG), 148–149 (NE), H159, R176, D178, 189–194 (TAYSLS), and Q249.

Belongs to the NAD kinase family. A divalent metal cation is required as a cofactor.

Its subcellular location is the cytoplasm. It catalyses the reaction NAD(+) + ATP = ADP + NADP(+) + H(+). Its function is as follows. Involved in the regulation of the intracellular balance of NAD and NADP, and is a key enzyme in the biosynthesis of NADP. Catalyzes specifically the phosphorylation on 2'-hydroxyl of the adenosine moiety of NAD to yield NADP. This chain is NAD kinase, found in Vibrio parahaemolyticus serotype O3:K6 (strain RIMD 2210633).